The sequence spans 205 residues: 3-demethoxyubiquinol 3-hydroxylase (205 aa).

Positions 54, 84, 87, 136, 168, and 171 each coordinate Fe cation.

It belongs to the COQ7 family. The cofactor is Fe cation.

It localises to the cell membrane. It carries out the reaction a 5-methoxy-2-methyl-3-(all-trans-polyprenyl)benzene-1,4-diol + AH2 + O2 = a 3-demethylubiquinol + A + H2O. The protein operates within cofactor biosynthesis; ubiquinone biosynthesis. Its function is as follows. Catalyzes the hydroxylation of 2-nonaprenyl-3-methyl-6-methoxy-1,4-benzoquinol during ubiquinone biosynthesis. The chain is 3-demethoxyubiquinol 3-hydroxylase from Paracidovorax citrulli (strain AAC00-1) (Acidovorax citrulli).